Reading from the N-terminus, the 410-residue chain is Segmentation protein fushi tarazu (410 aa).

Disordered stretches follow at residues 71–93, 138–157, and 175–221; these read TQTVPPVQPTTPPPKATKRKAED, PAVSTKVTASPAPSYDQEYV, and SPQS…SAVS. A compositionally biased stretch (pro residues) spans 76–85; it reads PVQPTTPPPK. Pro residues predominate over residues 190–199; sequence TPPPTTPTSL. The segment at residues 254–313 is a DNA-binding region (homeobox); the sequence is SKRTRQTYTRYQTLELEKEFHFNRYITRRRRIDIANALSLSERQIKIWFQNRRMKSKKDR.

The protein belongs to the Antp homeobox family. Phosphorylated at as many as 16 sites. In terms of tissue distribution, expressed early in development in a striped pattern at the blastoderm stage. Later expressed in a specific subset of neuronal precursor cells, neurons and glia in the developing CNS. Between 5 and 6 hours of development, found in the midline precursor-2 cells in a segmentally repeating pattern. Expression in many other neuronal precursors follows and reaches a second peak of abundance at 9 hours of development. Expressed in the hindgut between 11-15 hours of development.

The protein resides in the nucleus. Functionally, may play a role in determining neuronal identity, may be directly involved in specifying identity of individual neurons. Required during embryogenesis for the process of body segmentation. Homeotic protein, required in alternating segment primordia, it specifies the correct number of segments. The sequence is that of Segmentation protein fushi tarazu (ftz) from Drosophila melanogaster (Fruit fly).